We begin with the raw amino-acid sequence, 248 residues long: 14-3-3 protein sigma (248 aa).

Ser5, Ser74, and Ser248 each carry phosphoserine.

Belongs to the 14-3-3 family. As to quaternary structure, homodimer. Interacts with KRT17 and SAMSN1. Found in a complex with XPO7, EIF4A1, ARHGAP1, VPS26A, VPS29 and VPS35. Interacts with GAB2. Interacts with SRPK2. Interacts with COPS6. Interacts with COP1; this interaction leads to proteasomal degradation. Interacts with the 'Thr-369' phosphorylated form of DAPK2. Interacts with PI4KB. Interacts with SLITRK1. Interacts with LRRK2; this interaction is dependent on LRRK2 phosphorylation. Interacts with PKP3 (via N-terminus); the interaction maintains the cytoplasmic pool of PKP3, facilitates PKP3 exchange at desmosomes and restricts PKP3 localization to existing desmosome cell junctions. Interacts with LCP2. Post-translationally, ubiquitinated. Ubiquitination by RFFL induces proteasomal degradation and indirectly regulates p53/TP53 activation. As to expression, present mainly in tissues enriched in stratified squamous keratinizing epithelium.

Its subcellular location is the cytoplasm. It localises to the nucleus. The protein localises to the secreted. In terms of biological role, adapter protein implicated in the regulation of a large spectrum of both general and specialized signaling pathways. Binds to a large number of partners, usually by recognition of a phosphoserine or phosphothreonine motif. Binding generally results in the modulation of the activity of the binding partner. Promotes cytosolic retention of GBP1 GTPase by binding to phosphorylated GBP1, thereby inhibiting the innate immune response. Also acts as a TP53/p53-regulated inhibitor of G2/M progression. When bound to KRT17, regulates protein synthesis and epithelial cell growth by stimulating Akt/mTOR pathway. Acts to maintain desmosome cell junction adhesion in epithelial cells via interacting with and sequestering PKP3 to the cytoplasm, thereby restricting its translocation to existing desmosome structures and therefore maintaining desmosome protein homeostasis. Also acts to facilitate PKP3 exchange at desmosome plaques, thereby maintaining keratinocyte intercellular adhesion. May also regulate MDM2 autoubiquitination and degradation and thereby activate p53/TP53. This is 14-3-3 protein sigma (SFN) from Homo sapiens (Human).